The chain runs to 265 residues: Undecaprenyl-diphosphatase (265 aa).

Helical transmembrane passes span 15–37, 41–61, 85–105, 109–129, 144–164, 183–203, 218–238, and 244–264; these read GLTE…LLEY, KAES…VFLY, YLLA…HSFI, LFGP…ILAV, VSPA…WPGF, LAAE…TGYD, FWAV…KGFI, and VTFR…LLFW.

It belongs to the UppP family.

The protein localises to the cell inner membrane. It carries out the reaction di-trans,octa-cis-undecaprenyl diphosphate + H2O = di-trans,octa-cis-undecaprenyl phosphate + phosphate + H(+). Catalyzes the dephosphorylation of undecaprenyl diphosphate (UPP). Confers resistance to bacitracin. This is Undecaprenyl-diphosphatase from Oleidesulfovibrio alaskensis (strain ATCC BAA-1058 / DSM 17464 / G20) (Desulfovibrio alaskensis).